Here is a 196-residue protein sequence, read N- to C-terminus: [1-hydroxy-2-(trimethylamino)ethyl]phosphonate dioxygenase (glycine-betaine-forming) (196 aa).

Y30 serves as a coordination point for [(1R)-1-hydroxy-2-(trimethylamino)ethyl]phosphonate. Fe cation is bound by residues Y30, H40, H64, and D65. The region spanning M37–L156 is the HD domain. The [(1R)-1-hydroxy-2-(trimethylamino)ethyl]phosphonate site is built by H68, H86, H109, K113, S131, S134, and R163. Residues H86 and H109 each coordinate Fe cation. D166 contributes to the Fe cation binding site.

Requires Fe cation as cofactor.

The catalysed reaction is [(1R)-1-hydroxy-2-(trimethylamino)ethyl]phosphonate + O2 = glycine betaine + phosphate + 2 H(+). Functionally, involved in the degradation of the naturally occurring organophosphonate 2-(trimethylammonio)ethylphosphonate (TMAEP). Catalyzes the O(2)-dependent cleavage of (R)-1-hydroxy-2-(trimethylammonio)ethylphosphonate (OH-TMAEP) to yield glycine betaine and phosphate. Is highly specific for its N-trimethylated substrate. The protein is [1-hydroxy-2-(trimethylamino)ethyl]phosphonate dioxygenase (glycine-betaine-forming) of Leisingera caerulea (Phaeobacter caeruleus).